The following is a 115-amino-acid chain: MNIIDQLEQEQLRLDMPDFRAGDAIKVHVKIREGEKERIQIFAGVVIKKTKGLACARFTVRKISGGIGVERIFPLNSPSIDKIEVVTRGRVRRSKIYYLRNLRGKAARIKERRMA.

Belongs to the bacterial ribosomal protein bL19 family.

Its function is as follows. This protein is located at the 30S-50S ribosomal subunit interface and may play a role in the structure and function of the aminoacyl-tRNA binding site. The protein is Large ribosomal subunit protein bL19 of Desulforapulum autotrophicum (strain ATCC 43914 / DSM 3382 / VKM B-1955 / HRM2) (Desulfobacterium autotrophicum).